The following is a 144-amino-acid chain: Large ribosomal subunit protein uL22 (144 aa).

The segment at 123 to 144 (ELVKKRTMGHKKEKAKQKQKQQ) is disordered. Residues 125–144 (VKKRTMGHKKEKAKQKQKQQ) are compositionally biased toward basic residues.

The protein belongs to the universal ribosomal protein uL22 family. Part of the 50S ribosomal subunit.

Its function is as follows. This protein binds specifically to 23S rRNA; its binding is stimulated by other ribosomal proteins, e.g. L4, L17, and L20. It is important during the early stages of 50S assembly. It makes multiple contacts with different domains of the 23S rRNA in the assembled 50S subunit and ribosome. In terms of biological role, the globular domain of the protein is located near the polypeptide exit tunnel on the outside of the subunit, while an extended beta-hairpin is found that lines the wall of the exit tunnel in the center of the 70S ribosome. This Mycoplasma genitalium (strain ATCC 33530 / DSM 19775 / NCTC 10195 / G37) (Mycoplasmoides genitalium) protein is Large ribosomal subunit protein uL22.